We begin with the raw amino-acid sequence, 234 residues long: DNA repair and recombination protein RadB (234 aa).

It belongs to the eukaryotic RecA-like protein family. RadB subfamily.

In terms of biological role, involved in DNA repair and in homologous recombination. May regulate the cleavage reactions of the branch-structured DNA. Has a very weak ATPase activity that is not stimulated by DNA. Binds DNA but does not promote DNA strands exchange. The polypeptide is DNA repair and recombination protein RadB (Methanobrevibacter smithii (strain ATCC 35061 / DSM 861 / OCM 144 / PS)).